Reading from the N-terminus, the 467-residue chain is Argininosuccinate lyase (467 aa).

It belongs to the lyase 1 family. Argininosuccinate lyase subfamily.

It is found in the cytoplasm. It catalyses the reaction 2-(N(omega)-L-arginino)succinate = fumarate + L-arginine. It participates in amino-acid biosynthesis; L-arginine biosynthesis; L-arginine from L-ornithine and carbamoyl phosphate: step 3/3. This is Argininosuccinate lyase from Campylobacter curvus (strain 525.92).